The primary structure comprises 228 residues: MSTWANLGLQDSASPLMEQLIFFHDHALLILVMITVLVGYLMFMLFFNNYVNRFLLHGQLIEMIWTILPAIILLFIALPSLRLLYLLDEINEPSVTLKSIGHQWYWSYEYSDFNNIEFDSYMIPTNELTTDGFRLLDVDNRVILPMNSQIRILVTAADVIHSWTVPALGVKVDGTPGRLNQTNFFINRPGLFYGQCSEICGANHSFMPIVIESVPVNHFIKWISSNNS.

The Mitochondrial intermembrane portion of the chain corresponds to 1-26 (MSTWANLGLQDSASPLMEQLIFFHDH). Residues 27 to 48 (ALLILVMITVLVGYLMFMLFFN) form a helical membrane-spanning segment. Residues 49–62 (NYVNRFLLHGQLIE) lie on the Mitochondrial matrix side of the membrane. Residues 63 to 82 (MIWTILPAIILLFIALPSLR) form a helical membrane-spanning segment. The Mitochondrial intermembrane segment spans residues 83–228 (LLYLLDEINE…FIKWISSNNS (146 aa)). Cu cation is bound by residues His161, Cys196, Glu198, Cys200, His204, and Met207. Residue Glu198 coordinates Mg(2+).

This sequence belongs to the cytochrome c oxidase subunit 2 family. In terms of assembly, component of the cytochrome c oxidase (complex IV, CIV), a multisubunit enzyme composed of a catalytic core of 3 subunits and several supernumerary subunits. The complex exists as a monomer or a dimer and forms supercomplexes (SCs) in the inner mitochondrial membrane with ubiquinol-cytochrome c oxidoreductase (cytochrome b-c1 complex, complex III, CIII). Cu cation is required as a cofactor.

The protein resides in the mitochondrion inner membrane. The enzyme catalyses 4 Fe(II)-[cytochrome c] + O2 + 8 H(+)(in) = 4 Fe(III)-[cytochrome c] + 2 H2O + 4 H(+)(out). Component of the cytochrome c oxidase, the last enzyme in the mitochondrial electron transport chain which drives oxidative phosphorylation. The respiratory chain contains 3 multisubunit complexes succinate dehydrogenase (complex II, CII), ubiquinol-cytochrome c oxidoreductase (cytochrome b-c1 complex, complex III, CIII) and cytochrome c oxidase (complex IV, CIV), that cooperate to transfer electrons derived from NADH and succinate to molecular oxygen, creating an electrochemical gradient over the inner membrane that drives transmembrane transport and the ATP synthase. Cytochrome c oxidase is the component of the respiratory chain that catalyzes the reduction of oxygen to water. Electrons originating from reduced cytochrome c in the intermembrane space (IMS) are transferred via the dinuclear copper A center (CU(A)) of subunit 2 and heme A of subunit 1 to the active site in subunit 1, a binuclear center (BNC) formed by heme A3 and copper B (CU(B)). The BNC reduces molecular oxygen to 2 water molecules using 4 electrons from cytochrome c in the IMS and 4 protons from the mitochondrial matrix. The chain is Cytochrome c oxidase subunit 2 (mt:CoII) from Drosophila simulans (Fruit fly).